We begin with the raw amino-acid sequence, 262 residues long: 3-deoxy-manno-octulosonate cytidylyltransferase (262 aa).

This sequence belongs to the KdsB family.

The protein resides in the cytoplasm. The catalysed reaction is 3-deoxy-alpha-D-manno-oct-2-ulosonate + CTP = CMP-3-deoxy-beta-D-manno-octulosonate + diphosphate. Its pathway is nucleotide-sugar biosynthesis; CMP-3-deoxy-D-manno-octulosonate biosynthesis; CMP-3-deoxy-D-manno-octulosonate from 3-deoxy-D-manno-octulosonate and CTP: step 1/1. It participates in bacterial outer membrane biogenesis; lipopolysaccharide biosynthesis. Its function is as follows. Activates KDO (a required 8-carbon sugar) for incorporation into bacterial lipopolysaccharide in Gram-negative bacteria. The protein is 3-deoxy-manno-octulosonate cytidylyltransferase of Blochmanniella pennsylvanica (strain BPEN).